We begin with the raw amino-acid sequence, 195 residues long: SAGA-associated factor 11 homolog (195 aa).

The interval 1-22 (MSAANMPTTTGAQGSGNQVPRT) is disordered. The segment at 105 to 126 (CTCPNCDRLVAAARFAPHLEKC) adopts an SGF11-type zinc-finger fold. Positions 140-195 (RLATKEGATSAHLHSSGNTGGTDDEDDVDWSSDKRRKKSNQNSRNNGSKKNNGKTF) are disordered. Residue Ser-171 is modified to Phosphoserine. Over residues 179-195 (NQNSRNNGSKKNNGKTF) the composition is skewed to low complexity.

This sequence belongs to the SGF11 family. In terms of assembly, component of some SAGA transcription coactivator-HAT complexes, at least composed of Ada2b, not/nonstop, Pcaf/Gcn5, Sgf11 and Spt3. Within the SAGA complex, Sgf11, e(y)2, and not/nonstop form an additional subcomplex of SAGA called the DUB module (deubiquitination module). Interacts directly with not/nonstop. Interacts with the AMEX complex component xmas-2. Interacts with Cbp80; important for promoter recruitment of Sgf11 that is not associated with the DUB module.

Its subcellular location is the nucleus. It is found in the nucleoplasm. It localises to the cytoplasm. Its function is as follows. Component of the transcription regulatory histone acetylation (HAT) complex SAGA, a multiprotein complex that activates transcription by remodeling chromatin and mediating histone acetylation and deubiquitination. Within the SAGA complex, participates in a subcomplex that specifically deubiquitinates histone H2B. The SAGA complex is recruited to specific gene promoters by activators, where it is required for transcription. Required for nuclear receptor-mediated transactivation. Binds independently on SAGA to promoters in an RNA-dependent manner. Binds to mRNA and is essential for total mRNA export from the nucleus. Required to counteract heterochromatin silencing. Controls the development of neuronal connectivity in visual system by being required for accurate axon targeting in the optic lobe. Required for expression of ecdysone-induced genes such as br/broad. This is SAGA-associated factor 11 homolog from Drosophila sechellia (Fruit fly).